A 209-amino-acid polypeptide reads, in one-letter code: Thymidylate kinase (209 aa).

10-17 (GIDGCGKS) contacts ATP.

It belongs to the thymidylate kinase family.

The catalysed reaction is dTMP + ATP = dTDP + ADP. Phosphorylation of dTMP to form dTDP in both de novo and salvage pathways of dTTP synthesis. The protein is Thymidylate kinase of Synechococcus sp. (strain CC9902).